Here is a 660-residue protein sequence, read N- to C-terminus: Acetyl-coenzyme A synthetase (660 aa).

Residues 197 to 200 and Thr317 each bind CoA; that span reads RGGK. ATP contacts are provided by residues 397–399, 421–426, Asp512, and Arg528; these read GEP and DTFWQT. Ser536 is a CoA binding site. An ATP-binding site is contributed by Arg539. Residues Val550 and Val555 each coordinate Mg(2+). The residue at position 625 (Lys625) is an N6-acetyllysine.

The protein belongs to the ATP-dependent AMP-binding enzyme family. Mg(2+) is required as a cofactor. Post-translationally, acetylated. Deacetylation by the SIR2-homolog deacetylase activates the enzyme.

It catalyses the reaction acetate + ATP + CoA = acetyl-CoA + AMP + diphosphate. Catalyzes the conversion of acetate into acetyl-CoA (AcCoA), an essential intermediate at the junction of anabolic and catabolic pathways. AcsA undergoes a two-step reaction. In the first half reaction, AcsA combines acetate with ATP to form acetyl-adenylate (AcAMP) intermediate. In the second half reaction, it can then transfer the acetyl group from AcAMP to the sulfhydryl group of CoA, forming the product AcCoA. The polypeptide is Acetyl-coenzyme A synthetase (Ralstonia pickettii (strain 12J)).